The following is a 516-amino-acid chain: tRNA-2-methylthio-N(6)-dimethylallyladenosine synthase (516 aa).

The region spanning 17-133 (RSFEVRTFGC…LPSLLSRSEH (117 aa)) is the MTTase N-terminal domain. Cys26, Cys62, Cys96, Cys170, Cys174, and Cys177 together coordinate [4Fe-4S] cluster. One can recognise a Radical SAM core domain in the interval 156 to 392 (RESAYAGWVS…LALQERISTE (237 aa)). In terms of domain architecture, TRAM spans 395–466 (AKLIGTEVEL…PFFLIADSGV (72 aa)). Disordered regions lie at residues 409–438 (SGGR…QGHV) and 492–516 (GLGL…GCGC). The span at 412–438 (RKNDKTQRMTGRSRDGRLVHFDPQGHV) shows a compositional bias: basic and acidic residues.

It belongs to the methylthiotransferase family. MiaB subfamily. As to quaternary structure, monomer. [4Fe-4S] cluster serves as cofactor.

Its subcellular location is the cytoplasm. The catalysed reaction is N(6)-dimethylallyladenosine(37) in tRNA + (sulfur carrier)-SH + AH2 + 2 S-adenosyl-L-methionine = 2-methylsulfanyl-N(6)-dimethylallyladenosine(37) in tRNA + (sulfur carrier)-H + 5'-deoxyadenosine + L-methionine + A + S-adenosyl-L-homocysteine + 2 H(+). In terms of biological role, catalyzes the methylthiolation of N6-(dimethylallyl)adenosine (i(6)A), leading to the formation of 2-methylthio-N6-(dimethylallyl)adenosine (ms(2)i(6)A) at position 37 in tRNAs that read codons beginning with uridine. This chain is tRNA-2-methylthio-N(6)-dimethylallyladenosine synthase, found in Corynebacterium diphtheriae (strain ATCC 700971 / NCTC 13129 / Biotype gravis).